We begin with the raw amino-acid sequence, 617 residues long: KIF-binding protein (617 aa).

The interval 48-83 (ALLGPAPEDEDEPAADDGPGDQALGAGEPREAEGPG) is disordered. The segment covering 54–66 (PEDEDEPAADDGP) has biased composition (acidic residues). S174 bears the Phosphoserine mark.

Belongs to the KIF-binding protein family. Interacts with KIF1B; positively regulates KIF1B microtubule motor activity. Interacts with STMN2. In the embryo it is expressed in cortical neurons; expression increases during neuronal development.

Its subcellular location is the cytoplasm. It localises to the cytoskeleton. Its function is as follows. Activator of KIF1B plus-end-directed microtubule motor activity. Required for organization of axonal microtubules, and axonal outgrowth and maintenance during peripheral and central nervous system development. This is KIF-binding protein from Mus musculus (Mouse).